A 182-amino-acid chain; its full sequence is Cbp/p300-interacting transactivator 4 (182 aa).

A disordered region spans residues 22–129; the sequence is GPHAPRTLQP…PPPPPPALGC (108 aa). Positions 64-89 are enriched in polar residues; sequence SPVSFQPFPVSQSPGAGSTHLQSAAT. Low complexity predominate over residues 100–117; it reads AAAGGPSPLQPAPGAAAS.

Belongs to the CITED family. As to quaternary structure, interacts via its C-terminal region with the CH1 domain of CREBBP and EP300. Interacts with all TFAP2/AP-2 isoforms. Strongly expressed in heart, spleen and testis, and weakly in liver and kidney.

Its subcellular location is the nucleus. The protein resides in the cytoplasm. Acts as a transcriptional coactivator for TFAP2/AP-2. Enhances estrogen-dependent transactivation mediated by estrogen receptors. May function as an inhibitor of transactivation by HIF1A by disrupting HIF1A interaction with CREBBP. May be involved in regulation of gene expression during development and differentiation of blood cells, endothelial cells and mammary epithelial cells. The polypeptide is Cbp/p300-interacting transactivator 4 (Mus musculus (Mouse)).